A 419-amino-acid polypeptide reads, in one-letter code: Enolase (419 aa).

Glutamine 161 provides a ligand contact to (2R)-2-phosphoglycerate. Glutamate 205 serves as the catalytic Proton donor. Mg(2+)-binding residues include aspartate 240, glutamate 283, and aspartate 309. Residues lysine 334, arginine 363, serine 364, and lysine 385 each coordinate (2R)-2-phosphoglycerate. Catalysis depends on lysine 334, which acts as the Proton acceptor.

The protein belongs to the enolase family. Mg(2+) is required as a cofactor.

It localises to the cytoplasm. The protein localises to the secreted. It is found in the cell surface. It catalyses the reaction (2R)-2-phosphoglycerate = phosphoenolpyruvate + H2O. Its pathway is carbohydrate degradation; glycolysis; pyruvate from D-glyceraldehyde 3-phosphate: step 4/5. Catalyzes the reversible conversion of 2-phosphoglycerate (2-PG) into phosphoenolpyruvate (PEP). It is essential for the degradation of carbohydrates via glycolysis. The chain is Enolase from Saccharolobus solfataricus (strain ATCC 35092 / DSM 1617 / JCM 11322 / P2) (Sulfolobus solfataricus).